Consider the following 227-residue polypeptide: Cytochrome c oxidase subunit 2 (227 aa).

The Mitochondrial intermembrane segment spans residues 1–14 (MAYTFQLGLQDATS). A helical transmembrane segment spans residues 15 to 45 (PIMEELTNFHDHTLMIVFLISSLVLYVISLM). Residues 46–59 (LTTKLTHTNTMDAQ) lie on the Mitochondrial matrix side of the membrane. The helical transmembrane segment at 60 to 87 (EVETIWTILPAVILILIALPSLRILYMM) threads the bilayer. The Mitochondrial intermembrane portion of the chain corresponds to 88-227 (DEINNPVLTV…HFENWSASMI (140 aa)). Cu cation-binding residues include H161, C196, E198, C200, H204, and M207. E198 contacts Mg(2+).

This sequence belongs to the cytochrome c oxidase subunit 2 family. As to quaternary structure, component of the cytochrome c oxidase (complex IV, CIV), a multisubunit enzyme composed of 14 subunits. The complex is composed of a catalytic core of 3 subunits MT-CO1, MT-CO2 and MT-CO3, encoded in the mitochondrial DNA, and 11 supernumerary subunits COX4I, COX5A, COX5B, COX6A, COX6B, COX6C, COX7A, COX7B, COX7C, COX8 and NDUFA4, which are encoded in the nuclear genome. The complex exists as a monomer or a dimer and forms supercomplexes (SCs) in the inner mitochondrial membrane with NADH-ubiquinone oxidoreductase (complex I, CI) and ubiquinol-cytochrome c oxidoreductase (cytochrome b-c1 complex, complex III, CIII), resulting in different assemblies (supercomplex SCI(1)III(2)IV(1) and megacomplex MCI(2)III(2)IV(2)). Found in a complex with TMEM177, COA6, COX18, COX20, SCO1 and SCO2. Interacts with TMEM177 in a COX20-dependent manner. Interacts with COX20. Interacts with COX16. It depends on Cu cation as a cofactor.

The protein localises to the mitochondrion inner membrane. It carries out the reaction 4 Fe(II)-[cytochrome c] + O2 + 8 H(+)(in) = 4 Fe(III)-[cytochrome c] + 2 H2O + 4 H(+)(out). Component of the cytochrome c oxidase, the last enzyme in the mitochondrial electron transport chain which drives oxidative phosphorylation. The respiratory chain contains 3 multisubunit complexes succinate dehydrogenase (complex II, CII), ubiquinol-cytochrome c oxidoreductase (cytochrome b-c1 complex, complex III, CIII) and cytochrome c oxidase (complex IV, CIV), that cooperate to transfer electrons derived from NADH and succinate to molecular oxygen, creating an electrochemical gradient over the inner membrane that drives transmembrane transport and the ATP synthase. Cytochrome c oxidase is the component of the respiratory chain that catalyzes the reduction of oxygen to water. Electrons originating from reduced cytochrome c in the intermembrane space (IMS) are transferred via the dinuclear copper A center (CU(A)) of subunit 2 and heme A of subunit 1 to the active site in subunit 1, a binuclear center (BNC) formed by heme A3 and copper B (CU(B)). The BNC reduces molecular oxygen to 2 water molecules using 4 electrons from cytochrome c in the IMS and 4 protons from the mitochondrial matrix. This chain is Cytochrome c oxidase subunit 2 (MT-CO2), found in Niviventer culturatus (Oldfield white-bellied rat).